The following is a 392-amino-acid chain: Glucan endo-1,3-beta-glucosidase 14 (392 aa).

The N-terminal stretch at 1-21 is a signal peptide; it reads MATHSLSFFFRVLLLLFLTLS. Residues asparagine 54 and asparagine 89 are each glycosylated (N-linked (GlcNAc...) asparagine). The Proton donor role is filled by glutamate 122. The active-site Nucleophile is the glutamate 267. Serine 359 carries the GPI-anchor amidated serine lipid modification. Positions 360–392 are cleaved as a propeptide — removed in mature form; sequence RATTIKILNLWRVVMGLAVAWFILDMGDKMRMR.

Belongs to the glycosyl hydrolase 17 family.

It is found in the cell membrane. The protein resides in the secreted. The protein localises to the cell wall. Its subcellular location is the cytoplasm. It catalyses the reaction Hydrolysis of (1-&gt;3)-beta-D-glucosidic linkages in (1-&gt;3)-beta-D-glucans.. The polypeptide is Glucan endo-1,3-beta-glucosidase 14 (Arabidopsis thaliana (Mouse-ear cress)).